A 139-amino-acid chain; its full sequence is Small ribosomal subunit protein uS12 (139 aa).

A disordered region spans residues Met1–Ala21. Over residues Ile8–Lys18 the composition is skewed to basic residues.

The protein belongs to the universal ribosomal protein uS12 family. As to quaternary structure, part of the 30S ribosomal subunit. Contacts proteins S8 and S17. May interact with IF1 in the 30S initiation complex.

Its function is as follows. With S4 and S5 plays an important role in translational accuracy. Interacts with and stabilizes bases of the 16S rRNA that are involved in tRNA selection in the A site and with the mRNA backbone. Located at the interface of the 30S and 50S subunits, it traverses the body of the 30S subunit contacting proteins on the other side and probably holding the rRNA structure together. The combined cluster of proteins S8, S12 and S17 appears to hold together the shoulder and platform of the 30S subunit. In Onion yellows phytoplasma (strain OY-M), this protein is Small ribosomal subunit protein uS12.